The following is a 495-amino-acid chain: Cytochrome P450 Tp4149 (495 aa).

2 helical membrane-spanning segments follow: residues 4 to 24 (ILSLETLLISWLSSFILMFFI) and 208 to 228 (YLSMFNLFSVGSYIPWLSWVD). An N-linked (GlcNAc...) asparagine glycan is attached at asparagine 419. Heme is bound at residue cysteine 437.

The protein belongs to the cytochrome P450 family. The cofactor is heme.

The protein resides in the membrane. It functions in the pathway secondary metabolite biosynthesis; terpenoid biosynthesis. In terms of biological role, probably involved in the biosynthesis of germacrene-derived sesquiterpene lactones. The protein is Cytochrome P450 Tp4149 of Tanacetum parthenium (Feverfew).